A 552-amino-acid chain; its full sequence is Arginine--tRNA ligase (552 aa).

A 'HIGH' region motif is present at residues 130–140; it reads ANPTGPLSIGH.

The protein belongs to the class-I aminoacyl-tRNA synthetase family. Monomer.

It localises to the cytoplasm. It catalyses the reaction tRNA(Arg) + L-arginine + ATP = L-arginyl-tRNA(Arg) + AMP + diphosphate. In Desulfotalea psychrophila (strain LSv54 / DSM 12343), this protein is Arginine--tRNA ligase.